We begin with the raw amino-acid sequence, 837 residues long: Toll-like receptor 4 (837 aa).

The first 23 residues, 1–23 (MMSASRLAGTLIPAMAFLSCVRP), serve as a signal peptide directing secretion. Topologically, residues 24–629 (ESWEPCVVPN…SLNITCQMNK (606 aa)) are extracellular. Residues cysteine 29 and cysteine 38 are joined by a disulfide bond. A glycan (N-linked (GlcNAc...) asparagine) is linked at asparagine 33. LRR repeat units follow at residues 53–74 (STKN…SFFS), 77–98 (ELQV…AYQS), 101–122 (HLST…AFSG), 125–146 (SLQK…PIGH), and 149–170 (TLKE…EYFS). The N-linked (GlcNAc...) asparagine glycan is linked to asparagine 171. 3 LRR repeats span residues 174-197 (NLEY…RVLH), 203-223 (NLSL…AFKE), and 225-245 (RLHK…KTCI). An N-linked (GlcNAc...) asparagine glycan is attached at asparagine 203. Cysteine 279 and cysteine 304 form a disulfide bridge. Residues asparagine 280 and asparagine 307 are each glycosylated (N-linked (GlcNAc...) asparagine). LRR repeat units follow at residues 329 to 349 (GWQH…LKLK), 350 to 371 (SLKR…VDLP), 372 to 392 (SLEF…CSQS), 398 to 420 (SLKY…LGLE), 421 to 442 (QLEH…SVFL), 446 to 454 (NLIYLDISH), 470 to 493 (SLEV…FTEL), 495 to 516 (NLTF…AFNS), 519 to 540 (SLQV…PYKC), and 543 to 563 (SLRV…QELQ). Cysteine 388 and cysteine 389 are disulfide-bonded. Asparagine 495 and asparagine 524 each carry an N-linked (GlcNAc...) asparagine glycan. Asparagine 573 carries N-linked (GlcNAc...) asparagine glycosylation. In terms of domain architecture, LRRCT spans 577–627 (NDFACTCEHQSFLQWIKDQRQLLVEVERMECATPSDKQGMPVLSLNITCQM). 2 disulfide bridges follow: cysteine 581/cysteine 607 and cysteine 583/cysteine 625. 2 N-linked (GlcNAc...) asparagine glycosylation sites follow: asparagine 622 and asparagine 628. Residues 630 to 650 (TIIGVSVLSVLVVSVVAVLVY) traverse the membrane as a helical segment. The Cytoplasmic segment spans residues 651–837 (KFYFHLMLLA…GCNWQEATSI (187 aa)). The 144-residue stretch at 670-813 (NVYDAFVIYS…IFWRRLRKAL (144 aa)) folds into the TIR domain.

The protein belongs to the Toll-like receptor family. Belongs to the lipopolysaccharide (LPS) receptor, a multi-protein complex containing at least CD14, LY96 and TLR4. Binding to bacterial LPS leads to homodimerization. Interacts with LY96 via the extracellular domain. Interacts with MYD88 and TIRAP via their respective TIR domains. Interacts with TICAM2. Interacts with NOX4. Interacts with CNPY3 and HSP90B1; this interaction is required for proper folding in the endoplasmic reticulum. Interacts with MAP3K21; this interaction leads to negative regulation of TLR4 signaling. Interacts with CD36, following CD36 stimulation by oxLDL or amyloid-beta 42, and forms a heterodimer with TLR6. The trimeric complex is internalized and triggers inflammatory response. LYN kinase activity facilitates TLR4-TLR6 heterodimerization and signal initiation. Interacts with TICAM1 in response to LPS in a WDFY1-dependent manner. Interacts with WDFY1 in response to LPS. Interacts with SMPDL3B. Interacts with CEACAM1; upon lipopolysaccharide stimulation, forms a complex including TLR4 and the phosphorylated form of SYK and CEACAM1, which in turn, recruits PTPN6 that dephosphorylates SYK, reducing the production of reactive oxygen species (ROS) and lysosome disruption, which in turn, reduces the activity of the inflammasome. Interacts with RFTN1; the interaction occurs in response to lipopolysaccharide stimulation. Interacts with SCIMP; the interaction occurs in response to lipopolysaccharide stimulation and is enhanced by phosphorylation of SCIMP by LYN. This interaction facilitates the phosphorylation of TLR4 by LYN which elicits a selective cytokine response in macrophages. Interacts with TRAF3IP3. Interacts with TREM1; this interaction enhances TLR4-mediated inflammatory response. Interacts with ZG16B/PAUF. Interacts with CD82; this interaction inhibits TLR4-mediated signaling pathway. Post-translationally, phosphorylated on tyrosine residues by LYN after binding lipopolysaccharide. In terms of processing, ubiquitinated by RNF128 via 'Lys-28'-linked polyubiquitin chains, leading to proteasomal degradation.

The protein resides in the cell membrane. It is found in the early endosome. It localises to the cell projection. The protein localises to the ruffle. Transmembrane receptor that functions as a pattern recognition receptor recognizing pathogen- and damage-associated molecular patterns (PAMPs and DAMPs) to induce innate immune responses via downstream signaling pathways. At the plasma membrane, cooperates with LY96 to mediate the innate immune response to bacterial lipopolysaccharide (LPS). Also involved in LPS-independent inflammatory responses triggered by free fatty acids, such as palmitate, and Ni(2+). Mechanistically, acts via MYD88, TIRAP and TRAF6, leading to NF-kappa-B activation, cytokine secretion and the inflammatory response. Alternatively, CD14-mediated TLR4 internalization via endocytosis is associated with the initiation of a MYD88-independent signaling via the TICAM1-TBK1-IRF3 axis leading to type I interferon production. In addition to the secretion of proinflammatory cytokines, initiates the activation of NLRP3 inflammasome and formation of a positive feedback loop between autophagy and NF-kappa-B signaling cascade. In complex with TLR6, promotes inflammation in monocytes/macrophages by associating with TLR6 and the receptor CD86. Upon ligand binding, such as oxLDL or amyloid-beta 42, the TLR4:TLR6 complex is internalized and triggers inflammatory response, leading to NF-kappa-B-dependent production of CXCL1, CXCL2 and CCL9 cytokines, via MYD88 signaling pathway, and CCL5 cytokine, via TICAM1 signaling pathway. In myeloid dendritic cells, vesicular stomatitis virus glycoprotein G but not LPS promotes the activation of IRF7, leading to type I IFN production in a CD14-dependent manner. The polypeptide is Toll-like receptor 4 (TLR4) (Gorilla gorilla gorilla (Western lowland gorilla)).